The following is a 725-amino-acid chain: Ribonuclease R (725 aa).

In terms of domain architecture, RNB spans 264 to 592 (RQDLTDLAFV…IHRLLWMHLF (329 aa)). One can recognise an S1 motif domain in the interval 644–725 (GKTFSGFISA…IQKRAILTLI (82 aa)).

Belongs to the RNR ribonuclease family. RNase R subfamily.

It localises to the cytoplasm. The catalysed reaction is Exonucleolytic cleavage in the 3'- to 5'-direction to yield nucleoside 5'-phosphates.. In terms of biological role, 3'-5' exoribonuclease that releases 5'-nucleoside monophosphates and is involved in maturation of structured RNAs. This is Ribonuclease R from Mycoplasma genitalium (strain ATCC 33530 / DSM 19775 / NCTC 10195 / G37) (Mycoplasmoides genitalium).